The sequence spans 344 residues: Histone-lysine N-methyltransferase, H3 lysine-9 specific KMT1 (344 aa).

A Pre-SET domain is found at 79-174; the sequence is SGCSCAKDSE…DCPNRVVERG (96 aa). Cys-81, Cys-83, Cys-89, Cys-94, Cys-96, Cys-156, Cys-160, Cys-162, Cys-166, and Cys-272 together coordinate Zn(2+). Residues 177–312 form the SET domain; it reads IPLEIFRTPD…EGEELTFDYV (136 aa). Residue Tyr-311 coordinates S-adenosyl-L-methionine. A Post-SET domain is found at 328-344; that stretch reads HMTRCLCGSKKCRKFLW. Positions 332, 334, and 339 each coordinate Zn(2+).

Belongs to the class V-like SAM-binding methyltransferase superfamily.

The protein resides in the chromosome. The enzyme catalyses L-lysyl(9)-[histone H3] + 3 S-adenosyl-L-methionine = N(6),N(6),N(6)-trimethyl-L-lysyl(9)-[histone H3] + 3 S-adenosyl-L-homocysteine + 3 H(+). Histone methyltransferase that specifically trimethylates histone H3 to form H3K9me3. H3K9me3 marks chromatin regions for DNA methylation. Plays a key role in the regulation of the biosynthesis of the gamma-pyrones fusapyrone (FPY) and deoxyfusapyrone (dFPY). In Fusarium mangiferae (Mango malformation disease fungus), this protein is Histone-lysine N-methyltransferase, H3 lysine-9 specific KMT1.